The chain runs to 618 residues: Auxin efflux carrier component 3a (618 aa).

The Extracellular portion of the chain corresponds to 1–6; it reads MISGHD. A helical transmembrane segment spans residues 7-27; that stretch reads FYTVMAAVVPLYVAMFLAYGS. At 28–38 the chain is on the cytoplasmic side; sequence VRWWGIFTPDQ. Residues 39 to 59 traverse the membrane as a helical segment; that stretch reads CSGINRFVAIFAVPLLSFHFI. Valine 51 is a binding site for (indol-3-yl)acetate. Topologically, residues 60-70 are extracellular; that stretch reads STNDPYAMNLR. Residues 71–90 form a helical membrane-spanning segment; the sequence is FLAADTLQKLLVLAGLAAWS. The Cytoplasmic segment spans residues 91 to 104; that stretch reads RLPSRTGAPRLDWS. The chain crosses the membrane as a helical span at residues 105–125; sequence ITLFSLSTLPNTLVMGIPLLI. 2 residues coordinate (indol-3-yl)acetate: asparagine 115 and leucine 117. Residues 126–134 lie on the Extracellular side of the membrane; the sequence is AMYGPYSGS. Residues 135 to 155 form a helical membrane-spanning segment; the sequence is LMVQIVVLQCIIWYTLMLFLF. Residue tyrosine 148 coordinates (indol-3-yl)acetate. Over 156 to 478 the chain is Cytoplasmic; it reads EFRAARMLIA…LIRNPNTYSS (323 aa). The span at 281 to 293 shows a compositional bias: polar residues; it reads SLQSSRGPTPRQS. The interval 281-312 is disordered; it reads SLQSSRGPTPRQSNFDEHSARPPKPPATTTGA. Residues 479–499 form a helical membrane-spanning segment; the sequence is LLGLAWSLVAFRWHVSMPAIV. The Extracellular segment spans residues 500 to 502; that stretch reads EKS. A helical transmembrane segment spans residues 503–523; sequence ISILSDAGLGMAMFSLGLFMA. Over 524–539 the chain is Cytoplasmic; the sequence is LQPSIIACGKSAAVVS. Residues 540 to 560 form a helical membrane-spanning segment; it reads MAVRFLAGPAVMAAASIAIGL. At 561–563 the chain is on the extracellular side; that stretch reads RGT. The helical transmembrane segment at 564–584 threads the bilayer; that stretch reads LLHVAIVQAALPQGIVPFVFA. Residues isoleucine 578 and valine 579 each coordinate (indol-3-yl)acetate. The Cytoplasmic portion of the chain corresponds to 585-597; it reads KEYNVHPAILSTA. A helical membrane pass occupies residues 598–618; that stretch reads VIFGMLIALPITLLYYILLGL.

Belongs to the auxin efflux carrier (TC 2.A.69.1) family. In terms of assembly, homodimer. As to expression, expressed in coleoptiles, roots, vascular bundles of leaves, shoots, lamina joints and vascular bundles of the lemma and filament. Expressed in stem bases, stems, leaves and young panicles.

The protein resides in the cell membrane. Acts as a component of the auxin efflux carrier. Involved in the polar auxin transport which may regulate crown root development and response to water stress. The protein is Auxin efflux carrier component 3a of Oryza sativa subsp. japonica (Rice).